We begin with the raw amino-acid sequence, 253 residues long: Solute carrier family 66 member 2 (253 aa).

6 helical membrane passes run 7–27, 49–69, 72–92, 125–145, 150–170, and 214–234; these read GWLL…AMVF, FSTY…LFWF, HFES…LLML, FADY…ITYL, ALFV…LGVP, and VCGL…YVFT. Residues 14-80 enclose the PQ-loop 1 domain; that stretch reads HQLVSWGAAG…RHFESPLLWQ (67 aa). Positions 160-215 constitute a PQ-loop 2 domain; that stretch reads AVLTEAMLGVPQLYRNHRHQSTEGMSIKMVLMWTSGDTFKTAYFLLNGAPLQFSVC.

The protein localises to the membrane. This chain is Solute carrier family 66 member 2 (SLC66A2), found in Bos taurus (Bovine).